A 350-amino-acid chain; its full sequence is tRNA uridine(34) hydroxylase (350 aa).

The Rhodanese domain occupies 146 to 240 (DDPDALFIDM…YARKAREQGL (95 aa)). The Cysteine persulfide intermediate role is filled by cysteine 200.

The protein belongs to the TrhO family.

The enzyme catalyses uridine(34) in tRNA + AH2 + O2 = 5-hydroxyuridine(34) in tRNA + A + H2O. In terms of biological role, catalyzes oxygen-dependent 5-hydroxyuridine (ho5U) modification at position 34 in tRNAs, the first step in 5-carboxymethoxyuridine (cmo5U) biosynthesis. May be part of an alternate pathway, which is able to bypass cmo5U biogenesis in a subset of tRNAs under aerobic conditions. This chain is tRNA uridine(34) hydroxylase, found in Escherichia coli O127:H6 (strain E2348/69 / EPEC).